We begin with the raw amino-acid sequence, 490 residues long: Cytochrome P450 2C1 (490 aa).

Residue C435 participates in heme binding.

It belongs to the cytochrome P450 family. It depends on heme as a cofactor.

It localises to the endoplasmic reticulum membrane. Its subcellular location is the microsome membrane. It carries out the reaction an organic molecule + reduced [NADPH--hemoprotein reductase] + O2 = an alcohol + oxidized [NADPH--hemoprotein reductase] + H2O + H(+). Its function is as follows. Cytochromes P450 are a group of heme-thiolate monooxygenases. In liver microsomes, this enzyme is involved in an NADPH-dependent electron transport pathway. It oxidizes a variety of structurally unrelated compounds, including steroids, fatty acids, and xenobiotics. The protein is Cytochrome P450 2C1 (CYP2C1) of Oryctolagus cuniculus (Rabbit).